The following is a 435-amino-acid chain: Histone acetyltransferase type B subunit 2 (435 aa).

WD repeat units follow at residues 135-175, 188-228, 238-278, 284-324, and 328-368; these read NHAG…SKAP, GQTK…KQDP, GHSA…TAKA, GHNA…TKHH, and AHTN…AEQT. Residues 370 to 374 form an interaction with the histone H4 N-terminus region; sequence DDAED. Residues 385–425 form a WD 6 repeat; that stretch reads GHTSKVCDISWSPSSPWTIASASEDNILQVWEPSRHLRTPY.

This sequence belongs to the WD repeat RBAP46/RBAP48/MSI1 family. As to quaternary structure, component of the HAT-B complex composed of at least HAT1 and HAT2. The HAT-B complex binds to histone H4 tail.

Its subcellular location is the cytoplasm. The protein localises to the nucleus. In terms of biological role, regulatory subunit of the histone acetylase B (HAT-B) complex. The complex acetylates 'Lys-12' of histone H4 which is required for telomeric silencing. This Cryptococcus neoformans var. neoformans serotype D (strain B-3501A) (Filobasidiella neoformans) protein is Histone acetyltransferase type B subunit 2 (HAT2).